Here is a 443-residue protein sequence, read N- to C-terminus: Ribulose bisphosphate carboxylase large chain (443 aa).

Substrate-binding residues include asparagine 89 and threonine 139. The Proton acceptor role is filled by lysine 141. Position 143 (lysine 143) interacts with substrate. Mg(2+) contacts are provided by lysine 167, aspartate 169, and glutamate 170. N6-carboxylysine is present on lysine 167. The active-site Proton acceptor is the histidine 260. Substrate-binding residues include arginine 261, histidine 293, and serine 345.

This sequence belongs to the RuBisCO large chain family. Type I subfamily. As to quaternary structure, heterohexadecamer of 8 large chains and 8 small chains; disulfide-linked. The disulfide link is formed within the large subunit homodimers. The cofactor is Mg(2+). Post-translationally, the disulfide bond which can form in the large chain dimeric partners within the hexadecamer appears to be associated with oxidative stress and protein turnover.

Its subcellular location is the plastid. The protein resides in the chloroplast. The catalysed reaction is 2 (2R)-3-phosphoglycerate + 2 H(+) = D-ribulose 1,5-bisphosphate + CO2 + H2O. It catalyses the reaction D-ribulose 1,5-bisphosphate + O2 = 2-phosphoglycolate + (2R)-3-phosphoglycerate + 2 H(+). Functionally, ruBisCO catalyzes two reactions: the carboxylation of D-ribulose 1,5-bisphosphate, the primary event in carbon dioxide fixation, as well as the oxidative fragmentation of the pentose substrate in the photorespiration process. Both reactions occur simultaneously and in competition at the same active site. The polypeptide is Ribulose bisphosphate carboxylase large chain (Buddleja davidii (Butterfly bush)).